We begin with the raw amino-acid sequence, 234 residues long: Small ribosomal subunit protein eS4 (234 aa).

The 64-residue stretch at Met-43–Glu-106 folds into the S4 RNA-binding domain.

Belongs to the eukaryotic ribosomal protein eS4 family.

The sequence is that of Small ribosomal subunit protein eS4 from Nanoarchaeum equitans (strain Kin4-M).